A 159-amino-acid chain; its full sequence is 2-amino-4-hydroxy-6-hydroxymethyldihydropteridine pyrophosphokinase (159 aa).

It belongs to the HPPK family. Monomer.

The catalysed reaction is 6-hydroxymethyl-7,8-dihydropterin + ATP = (7,8-dihydropterin-6-yl)methyl diphosphate + AMP + H(+). It functions in the pathway cofactor biosynthesis; tetrahydrofolate biosynthesis; 2-amino-4-hydroxy-6-hydroxymethyl-7,8-dihydropteridine diphosphate from 7,8-dihydroneopterin triphosphate: step 4/4. Its function is as follows. Catalyzes the transfer of pyrophosphate from adenosine triphosphate (ATP) to 6-hydroxymethyl-7,8-dihydropterin, an enzymatic step in folate biosynthesis pathway. The protein is 2-amino-4-hydroxy-6-hydroxymethyldihydropteridine pyrophosphokinase (folK) of Escherichia coli (strain K12).